The chain runs to 522 residues: Na(+)/H(+) antiporter NhaB (522 aa).

A run of 11 helical transmembrane segments spans residues valine 25–leucine 45, phenylalanine 49–alanine 69, isoleucine 87–methionine 107, leucine 128–valine 162, leucine 201–proline 221, phenylalanine 237–isoleucine 257, valine 302–isoleucine 322, leucine 356–isoleucine 376, leucine 388–alanine 408, alanine 446–isoleucine 466, and methionine 476–leucine 496.

Belongs to the NhaB Na(+)/H(+) (TC 2.A.34) antiporter family.

It is found in the cell inner membrane. It carries out the reaction 2 Na(+)(in) + 3 H(+)(out) = 2 Na(+)(out) + 3 H(+)(in). Functionally, na(+)/H(+) antiporter that extrudes sodium in exchange for external protons. The chain is Na(+)/H(+) antiporter NhaB from Actinobacillus succinogenes (strain ATCC 55618 / DSM 22257 / CCUG 43843 / 130Z).